A 115-amino-acid polypeptide reads, in one-letter code: Ribonuclease P protein component (115 aa).

Belongs to the RnpA family. As to quaternary structure, consists of a catalytic RNA component (M1 or rnpB) and a protein subunit.

The enzyme catalyses Endonucleolytic cleavage of RNA, removing 5'-extranucleotides from tRNA precursor.. Functionally, RNaseP catalyzes the removal of the 5'-leader sequence from pre-tRNA to produce the mature 5'-terminus. It can also cleave other RNA substrates such as 4.5S RNA. The protein component plays an auxiliary but essential role in vivo by binding to the 5'-leader sequence and broadening the substrate specificity of the ribozyme. The chain is Ribonuclease P protein component from Bacillus mycoides (strain KBAB4) (Bacillus weihenstephanensis).